Consider the following 173-residue polypeptide: C-phycocyanin-2 beta subunit (173 aa).

Asn73 bears the N4-methylasparagine mark. Residues Cys83 and Cys154 each contribute to the (2R,3E)-phycocyanobilin site.

Belongs to the phycobiliprotein family. As to quaternary structure, heterodimer of an alpha and a beta subunit, which further assembles into trimers and the trimers into hexamers. Contains two covalently linked bilin chromophores.

The protein resides in the cellular thylakoid membrane. In terms of biological role, light-harvesting photosynthetic bile pigment-protein from the phycobiliprotein complex (phycobilisome, PBS). Phycocyanin is the major phycobiliprotein in the PBS rod. This Synechococcus sp. (strain ATCC 27144 / PCC 6301 / SAUG 1402/1) (Anacystis nidulans) protein is C-phycocyanin-2 beta subunit (cpcB2).